We begin with the raw amino-acid sequence, 307 residues long: DDRGK domain-containing protein 1 (307 aa).

Over 1 to 2 (MD) the chain is Lumenal. The helical transmembrane segment at 3–23 (LILLVGIAVALLVILATLYFL) threads the bilayer. Over 24-307 (QNKNKAAGEA…PVQSAAGGDS (284 aa)) the chain is Cytoplasmic. Low complexity-rich tracts occupy residues 32–43 (EAKPAAAAPRRG) and 54–83 (RRAQ…PAAA). Residues 32 to 162 (EAKPAAAAPR…EEVEAEAERK (131 aa)) are disordered. The span at 117–162 (KMEAKEQKRLQREHELQEREKRKVKEAKEDAERKQQEEVEAEAERK) shows a compositional bias: basic and acidic residues.

This sequence belongs to the DDRGK1 family. As to quaternary structure, interacts with Atg9; the interaction is transient.

It localises to the endoplasmic reticulum membrane. Its function is as follows. Substrate adapter for ufmylation, the covalent attachment of the ubiquitin-like modifier UFM1 to substrate proteins. Required for ufmylation of Atg9; protects the nervous system during aging, possibly by stabilizing Atg9 and supporting its function. The protein is DDRGK domain-containing protein 1 of Drosophila willistoni (Fruit fly).